A 436-amino-acid chain; its full sequence is Serine--tRNA ligase (436 aa).

242–244 (TAE) contributes to the L-serine binding site. 273–275 (RSE) is a binding site for ATP. Residue Glu-296 coordinates L-serine. 360–363 (EISS) lines the ATP pocket. Ser-395 serves as a coordination point for L-serine.

It belongs to the class-II aminoacyl-tRNA synthetase family. Type-1 seryl-tRNA synthetase subfamily. In terms of assembly, homodimer. The tRNA molecule binds across the dimer.

The protein localises to the cytoplasm. The catalysed reaction is tRNA(Ser) + L-serine + ATP = L-seryl-tRNA(Ser) + AMP + diphosphate + H(+). The enzyme catalyses tRNA(Sec) + L-serine + ATP = L-seryl-tRNA(Sec) + AMP + diphosphate + H(+). It participates in aminoacyl-tRNA biosynthesis; selenocysteinyl-tRNA(Sec) biosynthesis; L-seryl-tRNA(Sec) from L-serine and tRNA(Sec): step 1/1. In terms of biological role, catalyzes the attachment of serine to tRNA(Ser). Is also able to aminoacylate tRNA(Sec) with serine, to form the misacylated tRNA L-seryl-tRNA(Sec), which will be further converted into selenocysteinyl-tRNA(Sec). The sequence is that of Serine--tRNA ligase from Polynucleobacter asymbioticus (strain DSM 18221 / CIP 109841 / QLW-P1DMWA-1) (Polynucleobacter necessarius subsp. asymbioticus).